Consider the following 170-residue polypeptide: Cytochrome b6-f complex subunit 4 (170 aa).

Transmembrane regions (helical) follow at residues 46–66, 105–125, and 141–161; these read LLFM…GLAV, LLGI…PFIE, and TVFL…TLPL.

This sequence belongs to the cytochrome b family. PetD subfamily. The 4 large subunits of the cytochrome b6-f complex are cytochrome b6, subunit IV (17 kDa polypeptide, PetD), cytochrome f and the Rieske protein, while the 4 small subunits are PetG, PetL, PetM and PetN. The complex functions as a dimer.

It localises to the cellular thylakoid membrane. Its function is as follows. Component of the cytochrome b6-f complex, which mediates electron transfer between photosystem II (PSII) and photosystem I (PSI), cyclic electron flow around PSI, and state transitions. The protein is Cytochrome b6-f complex subunit 4 of Synechococcus sp. (strain JA-3-3Ab) (Cyanobacteria bacterium Yellowstone A-Prime).